A 180-amino-acid polypeptide reads, in one-letter code: Probable chorismate pyruvate-lyase (180 aa).

Substrate is bound by residues Arg76, Leu113, and Glu171.

The protein belongs to the UbiC family.

The protein resides in the cytoplasm. It carries out the reaction chorismate = 4-hydroxybenzoate + pyruvate. It participates in cofactor biosynthesis; ubiquinone biosynthesis. Functionally, removes the pyruvyl group from chorismate, with concomitant aromatization of the ring, to provide 4-hydroxybenzoate (4HB) for the ubiquinone pathway. In Pseudoalteromonas translucida (strain TAC 125), this protein is Probable chorismate pyruvate-lyase.